We begin with the raw amino-acid sequence, 255 residues long: Sushi domain-containing protein 3 (255 aa).

The interval 1 to 25 (MRWAAATLRGKARPRGRAGVTTPAP) is disordered. The Extracellular segment spans residues 1–103 (MRWAAATLRG…VPPHETFGFK (103 aa)). N27 carries N-linked (GlcNAc...) asparagine glycosylation. The region spanning 30-93 (GTCAKLRLPP…WSSGSPVCKL (64 aa)) is the Sushi domain. 2 disulfides stabilise this stretch: C32/C75 and C61/C91. Residues 104–124 (VAVIASIVSCAIILLMSMAFL) traverse the membrane as a helical segment. Residues 125-255 (TCCLLKCVKK…PQQPAAYALG (131 aa)) lie on the Cytoplasmic side of the membrane. The disordered stretch occupies residues 173 to 255 (SGPSQAHDNH…PQQPAAYALG (83 aa)). The segment covering 179–191 (HDNHSFTTDHGES) has biased composition (basic and acidic residues).

In terms of tissue distribution, highly expressed in estrogen receptor-positive breast tumors.

The protein localises to the cell membrane. In terms of biological role, may play a role in breast tumorigenesis by promoting estrogen-dependent cell proliferation, cell-cell interactions and migration. This Homo sapiens (Human) protein is Sushi domain-containing protein 3 (SUSD3).